A 185-amino-acid polypeptide reads, in one-letter code: Ribosome-recycling factor (185 aa).

The protein belongs to the RRF family.

The protein localises to the cytoplasm. Functionally, responsible for the release of ribosomes from messenger RNA at the termination of protein biosynthesis. May increase the efficiency of translation by recycling ribosomes from one round of translation to another. This Teredinibacter turnerae (strain ATCC 39867 / T7901) protein is Ribosome-recycling factor.